The sequence spans 497 residues: Serine hydroxymethyltransferase (497 aa).

(6S)-5,6,7,8-tetrahydrofolate contacts are provided by residues Leu-176 and 180 to 182; that span reads GHL. Lys-289 is modified (N6-(pyridoxal phosphate)lysine).

This sequence belongs to the SHMT family. As to quaternary structure, homodimer. It depends on pyridoxal 5'-phosphate as a cofactor.

It is found in the cytoplasm. The catalysed reaction is (6R)-5,10-methylene-5,6,7,8-tetrahydrofolate + glycine + H2O = (6S)-5,6,7,8-tetrahydrofolate + L-serine. It participates in one-carbon metabolism; tetrahydrofolate interconversion. It functions in the pathway amino-acid biosynthesis; glycine biosynthesis; glycine from L-serine: step 1/1. Catalyzes the reversible interconversion of serine and glycine with tetrahydrofolate (THF) serving as the one-carbon carrier. This reaction serves as the major source of one-carbon groups required for the biosynthesis of purines, thymidylate, methionine, and other important biomolecules. Also exhibits THF-independent aldolase activity toward beta-hydroxyamino acids, producing glycine and aldehydes, via a retro-aldol mechanism. The polypeptide is Serine hydroxymethyltransferase (Chlamydia felis (strain Fe/C-56) (Chlamydophila felis)).